A 664-amino-acid polypeptide reads, in one-letter code: Alkaline/neutral invertase C, mitochondrial (664 aa).

A phosphoserine mark is found at serine 41, serine 125, and serine 657.

The protein belongs to the glycosyl hydrolase 100 family. Expressed in seedlings, roots and flowers.

It is found in the mitochondrion. It carries out the reaction Hydrolysis of terminal non-reducing beta-D-fructofuranoside residues in beta-D-fructofuranosides.. Its function is as follows. Mitochondrial invertase that cleaves sucrose into glucose and fructose and is involved in the regulation of aerial tissue development and floral transition. May be modulating hormone balance in relation to the radicle emergence. The chain is Alkaline/neutral invertase C, mitochondrial from Arabidopsis thaliana (Mouse-ear cress).